Here is a 161-residue protein sequence, read N- to C-terminus: Urease accessory protein UreE (161 aa).

The protein belongs to the UreE family.

It is found in the cytoplasm. Functionally, involved in urease metallocenter assembly. Binds nickel. Probably functions as a nickel donor during metallocenter assembly. This chain is Urease accessory protein UreE, found in Pseudarthrobacter chlorophenolicus (strain ATCC 700700 / DSM 12829 / CIP 107037 / JCM 12360 / KCTC 9906 / NCIMB 13794 / A6) (Arthrobacter chlorophenolicus).